Here is a 435-residue protein sequence, read N- to C-terminus: Serine--tRNA ligase (435 aa).

242–244 is a binding site for L-serine; the sequence is TAE. Position 273-275 (273-275) interacts with ATP; it reads RSE. Residue E296 coordinates L-serine. Residue 360–363 coordinates ATP; sequence EISS. Residue S396 participates in L-serine binding.

This sequence belongs to the class-II aminoacyl-tRNA synthetase family. Type-1 seryl-tRNA synthetase subfamily. As to quaternary structure, homodimer. The tRNA molecule binds across the dimer.

Its subcellular location is the cytoplasm. The catalysed reaction is tRNA(Ser) + L-serine + ATP = L-seryl-tRNA(Ser) + AMP + diphosphate + H(+). The enzyme catalyses tRNA(Sec) + L-serine + ATP = L-seryl-tRNA(Sec) + AMP + diphosphate + H(+). It functions in the pathway aminoacyl-tRNA biosynthesis; selenocysteinyl-tRNA(Sec) biosynthesis; L-seryl-tRNA(Sec) from L-serine and tRNA(Sec): step 1/1. In terms of biological role, catalyzes the attachment of serine to tRNA(Ser). Is also able to aminoacylate tRNA(Sec) with serine, to form the misacylated tRNA L-seryl-tRNA(Sec), which will be further converted into selenocysteinyl-tRNA(Sec). The protein is Serine--tRNA ligase of Vibrio vulnificus (strain CMCP6).